Consider the following 918-residue polypeptide: Glutamate receptor 2.5 (918 aa).

The N-terminal stretch at 1–30 is a signal peptide; that stretch reads MSLFHHLVSRFLSLWLLIFLVFLVLSLGKS. Residues 31–586 are Extracellular-facing; that stretch reads QKEALQVKVG…WVFLKPLTKE (556 aa). 6 N-linked (GlcNAc...) asparagine glycosylation sites follow: Asn46, Asn58, Asn122, Asn336, Asn340, and Asn546. The helical transmembrane segment at 587-607 threads the bilayer; the sequence is LWLVTAASFLYIGIMVWIFEY. Over 608–616 the chain is Cytoplasmic; that stretch reads QADEEFREQ. Residues 617 to 637 traverse the membrane as a helical segment; that stretch reads MIIDKISSVFYFSFSTLFFAH. Topologically, residues 638–647 are cytoplasmic; sequence RRPSESFFTR. The chain crosses the membrane as a helical span at residues 648-668; the sequence is VLVVVWCFVLLILTQSYTATL. The Extracellular segment spans residues 669–828; that stretch reads TSMLTVQELR…DSPIQLDHHS (160 aa). Asn791 is a glycosylation site (N-linked (GlcNAc...) asparagine). Residues 829-849 form a helical membrane-spanning segment; the sequence is FEALFLIVFVVSVILLLLMLA. Residues 850–918 are Cytoplasmic-facing; the sequence is SRGYQERQHN…VAPLSRLKSA (69 aa). Residues 857–881 are disordered; the sequence is QHNASPNLPNDQANAAQEEVNEEGN. Positions 866–881 are enriched in low complexity; that stretch reads NDQANAAQEEVNEEGN.

Belongs to the glutamate-gated ion channel (TC 1.A.10.1) family. May form heteromers. In terms of tissue distribution, expressed predominantly in roots.

The protein resides in the membrane. Glutamate-gated receptor that probably acts as a non-selective cation channel. May be involved in light-signal transduction and calcium homeostasis via the regulation of calcium influx into cells. The protein is Glutamate receptor 2.5 (GLR2.5) of Arabidopsis thaliana (Mouse-ear cress).